The sequence spans 272 residues: Secretagogin (272 aa).

6 EF-hand domains span residues 8–43 (LDAAGFLQIWQHFDADDNGYIEGKELDDFFRHMLKK), 53–89 (ERVQQIKKSFMSAYDATFDGRLQIEELANMILPQEEN), 101–136 (DNSVEFMKIWRKYDADSSGYISAAELKNFLKDLFLQ), 145–180 (KLDEYTDAMMKIFDKNKDGRLDLNDLARILALQENF), 193–228 (ERKRDFEKIFAHYDVSRTGALEGPEVDGFVKDMMEL), and 237–272 (DLDKFRECLLTHCDMNKDGKIQKSELALCLGLKHKP). Residues Asp21, Asp23, Asn25, Tyr27, and Glu32 each contribute to the Ca(2+) site. Ca(2+) contacts are provided by Asp114, Asp116, Ser118, Tyr120, Glu125, Asp158, Asn160, Asp162, Arg164, Asp169, Asp206, Ser208, Thr210, Glu217, Asp250, Asn252, Asp254, Lys256, and Glu261.

It is found in the cytoplasm. The sequence is that of Secretagogin (scgn) from Danio rerio (Zebrafish).